We begin with the raw amino-acid sequence, 374 residues long: Cyclin-dependent kinase 9 (374 aa).

Positions 19–318 (YEKLAKIGQG…SDDALNHDFF (300 aa)) constitute a Protein kinase domain. Residues 25–33 (IGQGTFGEV) and lysine 48 each bind ATP. Catalysis depends on aspartate 151, which acts as the Proton acceptor. Residues 345–374 (PRRRGHMPQQPANQNRNPATTSQSEFDRVF) form a disordered region. Polar residues predominate over residues 354–368 (QPANQNRNPATTSQS).

This sequence belongs to the protein kinase superfamily. CMGC Ser/Thr protein kinase family. CDC2/CDKX subfamily. As to quaternary structure, component of the super elongation complex (SEC). Associates with ccnt1/cyclin-T1, ccnt2/cyclin-T2 or ccnk/cyclin-K to form active P-TEFb.

It is found in the nucleus. The protein resides in the cytoplasm. It localises to the PML body. It carries out the reaction L-seryl-[protein] + ATP = O-phospho-L-seryl-[protein] + ADP + H(+). The enzyme catalyses L-threonyl-[protein] + ATP = O-phospho-L-threonyl-[protein] + ADP + H(+). It catalyses the reaction [DNA-directed RNA polymerase] + ATP = phospho-[DNA-directed RNA polymerase] + ADP + H(+). Protein kinase involved in the regulation of transcription. Member of the cyclin-dependent kinase pair (CDK9/cyclin-T) complex, also called positive transcription elongation factor b (P-TEFb), which facilitates the transition from abortive to productive elongation by phosphorylating the CTD (C-terminal domain) of the large subunit of RNA polymerase II (RNAP II) polr2a, supt5h and rdbp. This complex is inactive when in the 7SK snRNP complex form. Regulates cytokine inducible transcription networks by facilitating promoter recognition of target transcription factors. P-TEFb is also involved in cotranscriptional histone modification, mRNA processing and mRNA export. The polypeptide is Cyclin-dependent kinase 9 (Danio rerio (Zebrafish)).